Here is a 213-residue protein sequence, read N- to C-terminus: Kynurenine formamidase (213 aa).

A substrate-binding site is contributed by W18. 3 residues coordinate Zn(2+): H48, H52, and D54. The Proton donor/acceptor role is filled by H58. Zn(2+) contacts are provided by H160 and E172.

Belongs to the Cyclase 1 superfamily. KynB family. As to quaternary structure, homodimer. The cofactor is Zn(2+).

The catalysed reaction is N-formyl-L-kynurenine + H2O = L-kynurenine + formate + H(+). It functions in the pathway amino-acid degradation; L-tryptophan degradation via kynurenine pathway; L-kynurenine from L-tryptophan: step 2/2. Functionally, catalyzes the hydrolysis of N-formyl-L-kynurenine to L-kynurenine, the second step in the kynurenine pathway of tryptophan degradation. In Burkholderia pseudomallei (strain 1710b), this protein is Kynurenine formamidase.